Here is a 284-residue protein sequence, read N- to C-terminus: 2-dehydro-3-deoxyphosphooctonate aldolase (284 aa).

It belongs to the KdsA family.

It is found in the cytoplasm. The catalysed reaction is D-arabinose 5-phosphate + phosphoenolpyruvate + H2O = 3-deoxy-alpha-D-manno-2-octulosonate-8-phosphate + phosphate. The protein operates within carbohydrate biosynthesis; 3-deoxy-D-manno-octulosonate biosynthesis; 3-deoxy-D-manno-octulosonate from D-ribulose 5-phosphate: step 2/3. Its pathway is bacterial outer membrane biogenesis; lipopolysaccharide biosynthesis. The chain is 2-dehydro-3-deoxyphosphooctonate aldolase from Haemophilus influenzae (strain 86-028NP).